A 225-amino-acid chain; its full sequence is Cytidylate kinase (225 aa).

11–19 is an ATP binding site; the sequence is GPAAAGKST.

The protein belongs to the cytidylate kinase family. Type 1 subfamily.

It is found in the cytoplasm. The catalysed reaction is CMP + ATP = CDP + ADP. It catalyses the reaction dCMP + ATP = dCDP + ADP. The polypeptide is Cytidylate kinase (Bacillus cereus (strain ATCC 10987 / NRS 248)).